Reading from the N-terminus, the 147-residue chain is Large ribosomal subunit protein bL9 (147 aa).

It belongs to the bacterial ribosomal protein bL9 family.

Functionally, binds to the 23S rRNA. The protein is Large ribosomal subunit protein bL9 of Clostridium botulinum (strain Alaska E43 / Type E3).